The following is a 246-amino-acid chain: ATP synthase subunit a (246 aa).

A run of 5 helical transmembrane segments spans residues 34-54 (GQTM…TFIG), 92-112 (WVPL…LGQL), 130-150 (DINT…YAGL), 155-175 (FGYF…VLEF), and 196-216 (VVAV…MILF).

The protein belongs to the ATPase A chain family. As to quaternary structure, F-type ATPases have 2 components, CF(1) - the catalytic core - and CF(0) - the membrane proton channel. CF(1) has five subunits: alpha(3), beta(3), gamma(1), delta(1), epsilon(1). CF(0) has four main subunits: a, b, b' and c.

The protein resides in the cell inner membrane. In terms of biological role, key component of the proton channel; it plays a direct role in the translocation of protons across the membrane. This chain is ATP synthase subunit a, found in Gloeobacter violaceus (strain ATCC 29082 / PCC 7421).